The sequence spans 219 residues: Large ribosomal subunit protein uL16 (219 aa).

Belongs to the universal ribosomal protein uL16 family. Component of the large ribosomal subunit. Mature ribosomes consist of a small (40S) and a large (60S) subunit. The 40S subunit contains about 33 different proteins and 1 molecule of RNA (18S). The 60S subunit contains about 49 different proteins and 3 molecules of RNA (28S, 5.8S and 5S).

The sequence is that of Large ribosomal subunit protein uL16 (RpL10) from Bombyx mandarina (Wild silk moth).